The sequence spans 216 residues: Probable nicotinate-nucleotide adenylyltransferase (216 aa).

The protein belongs to the NadD family.

The enzyme catalyses nicotinate beta-D-ribonucleotide + ATP + H(+) = deamido-NAD(+) + diphosphate. It functions in the pathway cofactor biosynthesis; NAD(+) biosynthesis; deamido-NAD(+) from nicotinate D-ribonucleotide: step 1/1. Functionally, catalyzes the reversible adenylation of nicotinate mononucleotide (NaMN) to nicotinic acid adenine dinucleotide (NaAD). The sequence is that of Probable nicotinate-nucleotide adenylyltransferase from Pelobacter propionicus (strain DSM 2379 / NBRC 103807 / OttBd1).